Here is a 1910-residue protein sequence, read N- to C-terminus: Endoribonuclease dcr-1 (1910 aa).

The Helicase ATP-binding domain occupies 20–201; sequence LLDKATKKNT…KLMEQLKKLE (182 aa). Residue 33-40 participates in ATP binding; sequence LGTGSGKT. A DEAH box motif is present at residues 145–148; the sequence is DECH. A Helicase C-terminal domain is found at 371-542; that stretch reads EFQKERMKLE…TVNNPIEDDS (172 aa). The region spanning 571 to 667 is the Dicer dsRNA-binding fold domain; the sequence is AIALINRYCS…LPKGRESIAK (97 aa). One can recognise a PAZ domain in the interval 845–1003; that stretch reads YVSEVVANME…LVPELMDIHP (159 aa). 3 disordered regions span residues 951 to 988, 1227 to 1248, and 1272 to 1309; these read RIQNQPRRSRTVSNSSTSNIPQASASDSKESNTSVPHS, TASSSLSQTVQESTVSPPKQLT, and LEMSEDMEKPRRLEDTVNLEDYGDDQENQEDENTPTNF. Composition is skewed to polar residues over residues 970 to 988 and 1227 to 1245; these read IPQASASDSKESNTSVPHS and TASSSLSQTVQESTVSPPK. Residues 1245–1280 are a coiled coil; that stretch reads KQLTKEEEQFKKLQNDLLKQAKERLEALEMSEDMEK. Over residues 1272–1286 the composition is skewed to basic and acidic residues; the sequence is LEMSEDMEKPRRLED. Residues 1288–1304 show a composition bias toward acidic residues; sequence VNLEDYGDDQENQEDEN. RNase III domains are found at residues 1381–1589 and 1643–1805; these read VSHI…LTLG and FTQL…LDSG. Residues Glu-1682, Asp-1791, and Glu-1794 each contribute to the Mg(2+) site. Positions 1833–1896 constitute a DRBM domain; it reads SPIRELMEFE…AKRALKYLHQ (64 aa).

Belongs to the helicase family. Dicer subfamily. As to quaternary structure, component of the ERI/DICER complex at least composed of dcr-1, rrf-3 and eri-1. Interacts with pir-1. Requires Mg(2+) as cofactor. Mn(2+) serves as cofactor.

Functionally, component of the ERI/DICER complex which is involved in processing amplified double-stranded RNA (dsRNA) intermediates during small-RNA-mediated gene-silencing or RNA interference (RNAi). Involved in cleaving dsRNA in the RNAi pathway. It produces 21 to 23 bp dsRNAs (siRNAs) which target the selective destruction of homologous RNAs. Seems to process the precursor of the small temporal RNA let-7 which is involved in developmental timing. Required for avoidance behavior induced by small RNAs derived from pathogenic bacteria such as P.aeruginosa. Involved in innate immunity through its role in small RNA processing. In terms of biological role, tDCR-1 acts as a deoxyribonuclease (DNase) initiating DNA fragmentation during apoptosis, upstream of nucleases cps-6, crn-2 and nuc-1. This Caenorhabditis elegans protein is Endoribonuclease dcr-1.